The chain runs to 463 residues: Glycine--tRNA ligase (463 aa).

Positions 100 and 175 each coordinate substrate. ATP contacts are provided by residues 207–209 (RNE), 217–222 (FRTREF), 291–292 (EL), and 335–338 (GADR). Substrate is bound at residue 222–226 (FEQME). 331–335 (EPSLG) serves as a coordination point for substrate.

It belongs to the class-II aminoacyl-tRNA synthetase family. In terms of assembly, homodimer.

The protein localises to the cytoplasm. The enzyme catalyses tRNA(Gly) + glycine + ATP = glycyl-tRNA(Gly) + AMP + diphosphate. Catalyzes the attachment of glycine to tRNA(Gly). This chain is Glycine--tRNA ligase, found in Clostridium tetani (strain Massachusetts / E88).